The chain runs to 441 residues: Queuine tRNA-ribosyltransferase accessory subunit 2 (441 aa).

Zn(2+)-binding residues include C307, C309, C312, and H338.

Belongs to the queuine tRNA-ribosyltransferase family. QTRT2 subfamily. In terms of assembly, heterodimer of a catalytic subunit and an accessory subunit. The cofactor is Zn(2+).

It localises to the cytoplasm. Functionally, non-catalytic subunit of the queuine tRNA-ribosyltransferase (TGT) that catalyzes the base-exchange of a guanine (G) residue with queuine (Q) at position 34 (anticodon wobble position) in tRNAs with GU(N) anticodons (tRNA-Asp, -Asn, -His and -Tyr), resulting in the hypermodified nucleoside queuosine (7-(((4,5-cis-dihydroxy-2-cyclopenten-1-yl)amino)methyl)-7-deazaguanosine). This Schizosaccharomyces pombe (strain 972 / ATCC 24843) (Fission yeast) protein is Queuine tRNA-ribosyltransferase accessory subunit 2 (qtr2).